Reading from the N-terminus, the 200-residue chain is MSFSPLIRQLIDAFRVLPGVGQKTAQRMALQLLERDRSGGSRLALALGQAMDGVGHCRSCRTLTEEELCPQCADPRRDDTLLCVVEGPTDVYAVEQTGYRGRYFVLKGHLSPLDGLGPEAIGIPQLMERISQQGTFTEVILATNPTVEGEATAHYIAQLLHEKGLVASRIAHGVPLGGELDLVDGGTLAHSFAGRKPIAL.

The segment at 57-72 (CRSCRTLTEEELCPQC) adopts a C4-type zinc-finger fold. Residues 80–175 (TLLCVVEGPT…VASRIAHGVP (96 aa)) form the Toprim domain.

This sequence belongs to the RecR family.

In terms of biological role, may play a role in DNA repair. It seems to be involved in an RecBC-independent recombinational process of DNA repair. It may act with RecF and RecO. In Pseudomonas savastanoi pv. phaseolicola (strain 1448A / Race 6) (Pseudomonas syringae pv. phaseolicola (strain 1448A / Race 6)), this protein is Recombination protein RecR.